Here is a 211-residue protein sequence, read N- to C-terminus: Lysozyme g (211 aa).

The first 26 residues, methionine 1–glycine 26, serve as a signal peptide directing secretion. Cystine bridges form between cysteine 30–cysteine 86 and cysteine 44–cysteine 55. Residues glutamate 99 and aspartate 112 contribute to the active site.

Belongs to the glycosyl hydrolase 23 family. As to expression, granulocyte compartment of myelomonocytic cells.

Its subcellular location is the secreted. The enzyme catalyses Hydrolysis of (1-&gt;4)-beta-linkages between N-acetylmuramic acid and N-acetyl-D-glucosamine residues in a peptidoglycan and between N-acetyl-D-glucosamine residues in chitodextrins.. The sequence is that of Lysozyme g from Gallus gallus (Chicken).